Consider the following 573-residue polypeptide: Proline--tRNA ligase (573 aa).

The protein belongs to the class-II aminoacyl-tRNA synthetase family. ProS type 1 subfamily. As to quaternary structure, homodimer.

It is found in the cytoplasm. The enzyme catalyses tRNA(Pro) + L-proline + ATP = L-prolyl-tRNA(Pro) + AMP + diphosphate. In terms of biological role, catalyzes the attachment of proline to tRNA(Pro) in a two-step reaction: proline is first activated by ATP to form Pro-AMP and then transferred to the acceptor end of tRNA(Pro). As ProRS can inadvertently accommodate and process non-cognate amino acids such as alanine and cysteine, to avoid such errors it has two additional distinct editing activities against alanine. One activity is designated as 'pretransfer' editing and involves the tRNA(Pro)-independent hydrolysis of activated Ala-AMP. The other activity is designated 'posttransfer' editing and involves deacylation of mischarged Ala-tRNA(Pro). The misacylated Cys-tRNA(Pro) is not edited by ProRS. The protein is Proline--tRNA ligase of Moorella thermoacetica (strain ATCC 39073 / JCM 9320).